Consider the following 469-residue polypeptide: Aryl-phospho-beta-D-glucosidase BglH (469 aa).

Residue glutamate 175 is the Proton donor of the active site. The active-site Nucleophile is the glutamate 368.

The protein belongs to the glycosyl hydrolase 1 family.

It catalyses the reaction 6-phospho-beta-D-glucosyl-(1-&gt;4)-D-glucose + H2O = D-glucose 6-phosphate + D-glucose. Its function is as follows. Catalyzes the hydrolysis of aryl-phospho-beta-D-glucosides such as 4-methylumbelliferyl-phospho-beta-D-glucopyranoside (MUG-P), phosphoarbutin and phosphosalicin. Plays a major role in the utilization of arbutin or salicin as the sole carbon source. BglA and BglH are the major proteins contributing to hydrolysis of MUG-P by extracts of late-exponential-phase or stationary-phase B.subtilis cells. The sequence is that of Aryl-phospho-beta-D-glucosidase BglH (bglH) from Bacillus subtilis (strain 168).